A 570-amino-acid chain; its full sequence is MRFSAFFAPTLKEAPKDATLKSHEYLIRGGYIQQVGSGIYNFLPLGKRVMDKIRQVVKEEMDQAGAQEVMLGFVTPAELWRNSGRFEKYGKELLRFKDRKENDFVLGPTHEEMVVELAKGYVKSYKQLPLHLYQIHLKFRDEIRPRFGLMRGREFVMKDGYSFHANEADLIREFELMEATYKRIFTRLGLDFRVVEADSGAIGGSGSKEFMVLAQSGEDTIAVCDSCEYAANIEAAKRRAKKVDSPAPIASFSKFKTPEVKSIEALAEFFKVDPFYTLKVVVKKAFFDGGKSELAFFFLRGCDSLQETKACNAIGANELLDVSEEELIKAGLEPGFIGPYALKNLTGANHILFDLELKDAQGLIAGANERDHHFVGVNLGEFEGLIYKDLAEVGEGDGCPLCEGRLTYKKGIEVGHIFQLGTRYSEPLGANFLNPEGKSQPLVMGCYGIGVSRLLAAVIEQHHDEKGCIWTKSTAPFNLVIVVSNVKDPSQKAYAENLYNALQKEGIEVLLDDRDERYGSKMADFELLGIPYAVIVGKGLIEGQVELVNRANLQKGIVLADDILGRILEL.

Belongs to the class-II aminoacyl-tRNA synthetase family. ProS type 1 subfamily. In terms of assembly, homodimer.

It localises to the cytoplasm. The enzyme catalyses tRNA(Pro) + L-proline + ATP = L-prolyl-tRNA(Pro) + AMP + diphosphate. In terms of biological role, catalyzes the attachment of proline to tRNA(Pro) in a two-step reaction: proline is first activated by ATP to form Pro-AMP and then transferred to the acceptor end of tRNA(Pro). As ProRS can inadvertently accommodate and process non-cognate amino acids such as alanine and cysteine, to avoid such errors it has two additional distinct editing activities against alanine. One activity is designated as 'pretransfer' editing and involves the tRNA(Pro)-independent hydrolysis of activated Ala-AMP. The other activity is designated 'posttransfer' editing and involves deacylation of mischarged Ala-tRNA(Pro). The misacylated Cys-tRNA(Pro) is not edited by ProRS. The sequence is that of Proline--tRNA ligase from Wolinella succinogenes (strain ATCC 29543 / DSM 1740 / CCUG 13145 / JCM 31913 / LMG 7466 / NCTC 11488 / FDC 602W) (Vibrio succinogenes).